A 262-amino-acid polypeptide reads, in one-letter code: Acyl-[acyl-carrier-protein]--UDP-N-acetylglucosamine O-acyltransferase (262 aa).

This sequence belongs to the transferase hexapeptide repeat family. LpxA subfamily. As to quaternary structure, homotrimer.

Its subcellular location is the cytoplasm. The catalysed reaction is a (3R)-hydroxyacyl-[ACP] + UDP-N-acetyl-alpha-D-glucosamine = a UDP-3-O-[(3R)-3-hydroxyacyl]-N-acetyl-alpha-D-glucosamine + holo-[ACP]. It participates in glycolipid biosynthesis; lipid IV(A) biosynthesis; lipid IV(A) from (3R)-3-hydroxytetradecanoyl-[acyl-carrier-protein] and UDP-N-acetyl-alpha-D-glucosamine: step 1/6. Involved in the biosynthesis of lipid A, a phosphorylated glycolipid that anchors the lipopolysaccharide to the outer membrane of the cell. The polypeptide is Acyl-[acyl-carrier-protein]--UDP-N-acetylglucosamine O-acyltransferase (Burkholderia vietnamiensis (strain G4 / LMG 22486) (Burkholderia cepacia (strain R1808))).